A 649-amino-acid polypeptide reads, in one-letter code: Probable potassium transport system protein Kup (649 aa).

A run of 12 helical transmembrane segments spans residues methionine 1–methionine 21, isoleucine 42–alanine 62, glycine 84–leucine 104, isoleucine 126–phenylalanine 146, threonine 159–leucine 179, valine 195–leucine 215, isoleucine 235–alanine 255, valine 286–alanine 306, leucine 334–phenylalanine 354, tyrosine 364–tryptophan 384, valine 390–serine 410, and phenylalanine 414–threonine 434.

This sequence belongs to the HAK/KUP transporter (TC 2.A.72) family.

The protein localises to the cell membrane. It carries out the reaction K(+)(in) + H(+)(in) = K(+)(out) + H(+)(out). Its function is as follows. Transport of potassium into the cell. Likely operates as a K(+):H(+) symporter. The protein is Probable potassium transport system protein Kup of Bifidobacterium adolescentis (strain ATCC 15703 / DSM 20083 / NCTC 11814 / E194a).